The primary structure comprises 335 residues: DNA-directed RNA polymerase RPB7 homolog (335 aa).

Belongs to the Asfivirus DNA-directed RNA polymerase RPB7 homolog family. In terms of assembly, part of the viral DNA-directed RNA polymerase that consists of 8 polII-like subunits (RPB1, RPB2, RPB3, RPB5, RPB6, RPB7, RPB9, RPB10), a capping enzyme and a termination factor.

The protein resides in the host cytoplasm. Its subcellular location is the virion. In terms of biological role, component of the DNA-directed RNA polymerase (RNAP) that catalyzes the transcription in the cytoplasm of viral DNA into RNA using the four ribonucleoside triphosphates as substrates. The polypeptide is DNA-directed RNA polymerase RPB7 homolog (Ornithodoros (relapsing fever ticks)).